The chain runs to 392 residues: DNA replication and repair protein RecF (392 aa).

33–40 (GANGAGKT) lines the ATP pocket.

It belongs to the RecF family.

Its subcellular location is the cytoplasm. Its function is as follows. The RecF protein is involved in DNA metabolism; it is required for DNA replication and normal SOS inducibility. RecF binds preferentially to single-stranded, linear DNA. It also seems to bind ATP. The polypeptide is DNA replication and repair protein RecF (Caulobacter sp. (strain K31)).